The primary structure comprises 212 residues: Transcription factor MYB8 (212 aa).

HTH myb-type domains are found at residues Lys-9–Leu-61 and Arg-62–Leu-116. DNA-binding regions (H-T-H motif) lie at residues Trp-37–Leu-61 and Trp-89–Ile-112.

The protein localises to the nucleus. In terms of biological role, transcription activator. In Arabidopsis thaliana (Mouse-ear cress), this protein is Transcription factor MYB8.